Here is a 247-residue protein sequence, read N- to C-terminus: MKKTTKKTAGGYGGSGSHKLYQRVKKKAGTITASSRRWLERHLNDPYVHQSKVDGYRSRAAYKLIEINQRYKFLKKGQKIIDLGAAPGGWCQVSGCIVGSSDEKPSVVGIDYLHVDPLPGVVMLEMDFLHSDAPQKLIDALGTKPDVVLSDMAAPTTGHRQTDHLRTIYLCEVAADFALSVLKPGGHFLAKAFQGGAENTLLTTLKQNFKTVHHVKPPASRSESVELYLLALEFKAKTERKEQLFLF.

The disordered stretch occupies residues 1–21 (MKKTTKKTAGGYGGSGSHKLY). G88, W90, D111, D127, and D151 together coordinate S-adenosyl-L-methionine. K191 functions as the Proton acceptor in the catalytic mechanism.

This sequence belongs to the class I-like SAM-binding methyltransferase superfamily. RNA methyltransferase RlmE family.

It is found in the cytoplasm. It catalyses the reaction uridine(2552) in 23S rRNA + S-adenosyl-L-methionine = 2'-O-methyluridine(2552) in 23S rRNA + S-adenosyl-L-homocysteine + H(+). Functionally, specifically methylates the uridine in position 2552 of 23S rRNA at the 2'-O position of the ribose in the fully assembled 50S ribosomal subunit. This Bartonella henselae (strain ATCC 49882 / DSM 28221 / CCUG 30454 / Houston 1) (Rochalimaea henselae) protein is Ribosomal RNA large subunit methyltransferase E.